The primary structure comprises 242 residues: Probable derlin-1 homolog (242 aa).

Over 1–18 the chain is Cytoplasmic; it reads MDGVKEWFNSIPPVSRYM. A helical membrane pass occupies residues 19 to 39; it reads FAIFLGIPVLAAMHLISFNYL. Residues 40–98 lie on the Lumenal side of the membrane; it reads YLDFTFTFKHFHLWRLITAPCIISSLGPMFLFNLIFFYQYTTRLESLNYAGKSDDYLFC. The chain crosses the membrane as a helical span at residues 99-119; the sequence is IIFISICNIIFGLIFEYYFLG. Over 120 to 140 the chain is Cytoplasmic; the sequence is TMTIMSLIYIYSRMNPTGTSN. The helical transmembrane segment at 141–161 threads the bilayer; that stretch reads FYGFFSFKTIYLPWVFLVAHF. At 162–167 the chain is on the lumenal side; sequence LQTGHP. Residues 168–188 traverse the membrane as a helical segment; sequence PYSDFLAIVSGHIFFYLTDIY. The Cytoplasmic portion of the chain corresponds to 189 to 242; it reads PRANGVPALIKTPKFITNIFNKGDRNPNNVRRDPRTGRPIQEGGYNWGQGHALG. Basic and acidic residues predominate over residues 214–224; it reads NPNNVRRDPRT. Residues 214 to 242 are disordered; the sequence is NPNNVRRDPRTGRPIQEGGYNWGQGHALG. Residues 233–242 are compositionally biased toward gly residues; it reads YNWGQGHALG.

This sequence belongs to the derlin family.

It is found in the endoplasmic reticulum membrane. Functionally, may be involved in the degradation process of specific misfolded endoplasmic reticulum (ER) luminal proteins. May also involved in endoplasmic reticulum stress-induced pre-emptive quality control, a mechanism that selectively attenuates the translocation of newly synthesized proteins into the endoplasmic reticulum and reroutes them to the cytosol for proteasomal degradation. This Dictyostelium discoideum (Social amoeba) protein is Probable derlin-1 homolog.